A 270-amino-acid chain; its full sequence is UPF0354 protein BCE_4835 (270 aa).

Belongs to the UPF0354 family.

This is UPF0354 protein BCE_4835 from Bacillus cereus (strain ATCC 10987 / NRS 248).